Consider the following 290-residue polypeptide: ATP synthase gamma chain (290 aa).

It belongs to the ATPase gamma chain family. As to quaternary structure, F-type ATPases have 2 components, CF(1) - the catalytic core - and CF(0) - the membrane proton channel. CF(1) has five subunits: alpha(3), beta(3), gamma(1), delta(1), epsilon(1). CF(0) has three main subunits: a, b and c.

It is found in the cell membrane. Produces ATP from ADP in the presence of a proton gradient across the membrane. The gamma chain is believed to be important in regulating ATPase activity and the flow of protons through the CF(0) complex. The polypeptide is ATP synthase gamma chain (Wolbachia pipientis subsp. Culex pipiens (strain wPip)).